A 433-amino-acid polypeptide reads, in one-letter code: Deoxyguanosinetriphosphate triphosphohydrolase-like protein 2 (433 aa).

An HD domain is found at Arg-61–Thr-248.

It belongs to the dGTPase family. Type 2 subfamily.

The protein is Deoxyguanosinetriphosphate triphosphohydrolase-like protein 2 of Deinococcus radiodurans (strain ATCC 13939 / DSM 20539 / JCM 16871 / CCUG 27074 / LMG 4051 / NBRC 15346 / NCIMB 9279 / VKM B-1422 / R1).